Reading from the N-terminus, the 103-residue chain is Large ribosomal subunit protein bL21 (103 aa).

The protein belongs to the bacterial ribosomal protein bL21 family. As to quaternary structure, part of the 50S ribosomal subunit. Contacts protein L20.

Its function is as follows. This protein binds to 23S rRNA in the presence of protein L20. The sequence is that of Large ribosomal subunit protein bL21 from Vibrio parahaemolyticus serotype O3:K6 (strain RIMD 2210633).